The following is a 236-amino-acid chain: Chloride intracellular channel protein 3 (236 aa).

The segment at 1–88 (MAETKLQLFV…EDFLEETLGP (88 aa)) is required for insertion into the membrane. One can recognise a GST N-terminal domain in the interval 12–90 (ASEDGESVGH…FLEETLGPPD (79 aa)). A G-site motif is present at residues 22-25 (CPSC). Residues Cys22 and Cys25 are joined by a disulfide bond. Residues 24–44 (SCQRLFMVLLLKGVPFTLTTV) traverse the membrane as a helical segment. Ser49 and Ser159 each carry phosphoserine. One can recognise a GST C-terminal domain in the interval 68–235 (DSDAKTDTLQ…LAAYRPAVHP (168 aa)).

Belongs to the chloride channel CLIC family. As to quaternary structure, associated with the C-terminal of MAPK15. Detected in placenta (at protein level). Widely expressed. High expression is found in placenta followed by lung and heart. Low expression in skeletal muscle, kidney and pancreas.

Its subcellular location is the nucleus. It is found in the membrane. It localises to the cell membrane. The protein resides in the cytoplasm. The protein localises to the secreted. Its subcellular location is the extracellular space. It is found in the extracellular matrix. The catalysed reaction is chloride(in) = chloride(out). Its activity is regulated as follows. Inhibited by rapamycin, amphotericin B and IAA-94. In terms of biological role, in the soluble state, catalyzes glutaredoxin-like thiol disulfide exchange reactions with reduced glutathione as electron donor. Reduced in a glutathione-dependent way and secreted into the extracellular matrix where it activates TGM2 and promotes blood vessel growth during tissue remodeling as occurs in tumorigenesis. Can reduce specific cysteines in TGM2 and regulate cofactor binding. Can insert into membranes and form outwardly rectifying chloride ion channels. May participate in cellular growth control. This chain is Chloride intracellular channel protein 3, found in Homo sapiens (Human).